Reading from the N-terminus, the 1551-residue chain is Envelopment polyprotein (1551 aa).

The N-terminal stretch at 1-17 (MSKRVLIIAVVVYLVFT) is a signal peptide. At 18 to 546 (TQNQITGNHT…CRMSSRPTVA (529 aa)) the chain is on the lumenal side. Positions 24–66 (GNHTTINSSSPSTTEASSTPTVSRTPQTTTTSTAVSTTITATT) are disordered. Residues asparagine 25 and asparagine 30 are each glycosylated (N-linked (GlcNAc...) asparagine; by host). Positions 31–66 (SSSPSTTEASSTPTVSRTPQTTTTSTAVSTTITATT) are enriched in low complexity. 3 N-linked (GlcNAc...) asparagine; by host glycosylation sites follow: asparagine 80, asparagine 142, and asparagine 413. Residues 547-567 (LLLGIWIGCGYILTCIFSFLL) traverse the membrane as a helical segment. The Cytoplasmic segment spans residues 568 to 675 (YHLILFFANC…ISVGIFLKRT (108 aa)). Residues 676–696 (TWLVVLLVLLGLAISPVQGAP) traverse the membrane as a helical segment. At 697–704 (TEVSNVKQ) the chain is on the lumenal side. Residues 705–725 (DGDYSICYFIFGCLVTAALLL) traverse the membrane as a helical segment. At 726-823 (KVKRTNSNGI…REKLFTTGLQ (98 aa)) the chain is on the cytoplasmic side. A helical transmembrane segment spans residues 824 to 844 (LFINKTNVVVFALIMCFLLLL). Topologically, residues 845-1451 (TGHNASAFDS…GDFFKHYIGS (607 aa)) are lumenal. N-linked (GlcNAc...) asparagine; by host glycosylation is found at asparagine 848, asparagine 1201, asparagine 1258, and asparagine 1420. A disulfide bridge connects residues cysteine 1023 and cysteine 1216. A helical transmembrane segment spans residues 1452 to 1472 (IAVGVLGTVLPFALLILFFIY). Over 1473-1551 (GDKMLWPFKV…KKEKKLSEIA (79 aa)) the chain is Cytoplasmic.

Belongs to the nairovirus envelope glycoprotein family. In terms of assembly, heterodimer with glycoprotein C; in prefusion state. Heterodimer with glycoprotein N; in prefusion state. Homotrimeric; in postfusion state. In terms of processing, specific enzymatic cleavage by host MBTPS1/S1P/SKI-1 endopeptidase yield glycoprotein N. Specific enzymatic cleavages by host furin-like protease and MBTPS1/S1P endopeptidase yield GP38. Glycosylated.

Its subcellular location is the host endoplasmic reticulum membrane. It is found in the virion membrane. The protein localises to the host Golgi apparatus membrane. Glycoprotein N and glycoprotein C interact with each other and are present at the surface of the virion. Glycoprotein N probably locks the Gn-Gc complex in a prefusion state. Glycoprotein N and glycoprotein C are able to attach the virion to host cell receptors. This attachment induces virion internalization predominantly through clathrin-dependent endocytosis. In terms of biological role, glycoprotein C and glycoprotein N interact with each other and are present at the surface of the virion. The spikes at the surface of the virion are formed by an N-terminal extension of glycoprotein C. Glycoprotein N and glycoprotein C are able to attach the virion to host cell receptors. This attachment induces virion internalization predominantly through clathrin-dependent endocytosis. Class II fusion protein that promotes fusion of viral membrane with host endosomal membrane after endocytosis of the virion. Exposure to potassium is necessary for the conformational change leading to fusion. This chain is Envelopment polyprotein (GP), found in Amblyomma variegatum (Tropical bont tick).